The sequence spans 333 residues: Biotin synthase (333 aa).

The region spanning 46 to 275 (YYGKKVKLNM…TKEIRISGGR (230 aa)) is the Radical SAM core domain. Residues C64, C68, and C71 each coordinate [4Fe-4S] cluster. Residues C108, C140, C200, and R270 each coordinate [2Fe-2S] cluster.

This sequence belongs to the radical SAM superfamily. Biotin synthase family. As to quaternary structure, homodimer. [4Fe-4S] cluster serves as cofactor. Requires [2Fe-2S] cluster as cofactor.

The enzyme catalyses (4R,5S)-dethiobiotin + (sulfur carrier)-SH + 2 reduced [2Fe-2S]-[ferredoxin] + 2 S-adenosyl-L-methionine = (sulfur carrier)-H + biotin + 2 5'-deoxyadenosine + 2 L-methionine + 2 oxidized [2Fe-2S]-[ferredoxin]. It participates in cofactor biosynthesis; biotin biosynthesis; biotin from 7,8-diaminononanoate: step 2/2. In terms of biological role, catalyzes the conversion of dethiobiotin (DTB) to biotin by the insertion of a sulfur atom into dethiobiotin via a radical-based mechanism. In Halalkalibacterium halodurans (strain ATCC BAA-125 / DSM 18197 / FERM 7344 / JCM 9153 / C-125) (Bacillus halodurans), this protein is Biotin synthase.